The following is a 681-amino-acid chain: MSASPEDFERAAQLRRELEAHDHAYYVLDAPTVPDAEYDRLFRELDALERRHPELLVPDSPTRRVGGAPVPGLVPVRHAVPMLSIRTETDTTSGGVIAFDTRVRNALELGPHAPPVEYLGELKFDGLAISLRYENGMLVRAATRGDGYTGEDVTHSVRTIRQIPLRLPGRPPALIEVRGEIYMRRDAFERLNARQSETGGKVFVNPRNAAAGAVRQLDARIAARRPLSFFAYGFGEIGESGGWNMPATQGEMLDALDALGIPVCEHRVVASGPDGLIAFHDRIAAARDSLPYDIDGVVYKVNRFDLQRRLGFVTREPRWAVAHKYPAQEEITELVDIEIQVGRTGALTPVARLKPVFVGGVTVTNATLHNEEEIQRKGLLIGDQVIVRRAGDVIPQIVAPVVERRNGSERPFVMPQTCPVCGSHAEKQPDEAVTRCSGGLFCPAQRKQALLHFAGRRAMDIEGLGDKLVDQLVDGGIVSTPADLYRLGLVKLANLPRMADKSAANLLAAIEKSRHATLARFIFALGIRNVGEATARELARHFGSLDALMDADIERLQQVADVGPIVAHSIAGFFAEMHNREVIEQLRAAGVHWDEGVPAVAADGPASGKTFVLTGALPTMSRDDAKALIESHGGKVSGSVSKKTDYVVAGAEAGSKLAKAQELGVAILDEDGLRRLLEQPA.

Residues 35-39 (DAEYD), 84-85 (SI), and glutamate 121 contribute to the NAD(+) site. Lysine 123 (N6-AMP-lysine intermediate) is an active-site residue. NAD(+)-binding residues include arginine 144, glutamate 180, lysine 300, and lysine 324. 4 residues coordinate Zn(2+): cysteine 418, cysteine 421, cysteine 436, and cysteine 442. Positions 601 to 681 (AADGPASGKT…GLRRLLEQPA (81 aa)) constitute a BRCT domain.

Belongs to the NAD-dependent DNA ligase family. LigA subfamily. The cofactor is Mg(2+). Requires Mn(2+) as cofactor.

The catalysed reaction is NAD(+) + (deoxyribonucleotide)n-3'-hydroxyl + 5'-phospho-(deoxyribonucleotide)m = (deoxyribonucleotide)n+m + AMP + beta-nicotinamide D-nucleotide.. Functionally, DNA ligase that catalyzes the formation of phosphodiester linkages between 5'-phosphoryl and 3'-hydroxyl groups in double-stranded DNA using NAD as a coenzyme and as the energy source for the reaction. It is essential for DNA replication and repair of damaged DNA. This Aromatoleum aromaticum (strain DSM 19018 / LMG 30748 / EbN1) (Azoarcus sp. (strain EbN1)) protein is DNA ligase.